A 532-amino-acid chain; its full sequence is Flavin-containing monooxygenase 1 (532 aa).

At 1–510 (MVKRVAIVGA…TRTIQESPSS (510 aa)) the chain is on the lumenal side. FAD is bound by residues 9–13 (GAGVS), E32, 40–41 (LW), and 61–62 (NS). NADP(+) contacts are provided by residues 60–61 (SN) and 195–198 (SGTD). Residues 511-531 (FETLLKLFSFLALLIAVFLIF) form a helical membrane-spanning segment. L532 is a topological domain (cytoplasmic).

This sequence belongs to the FMO family. FAD is required as a cofactor. Liver.

It localises to the endoplasmic reticulum membrane. It carries out the reaction hypotaurine + NADPH + O2 + H(+) = taurine + NADP(+) + H2O. The catalysed reaction is hypotaurine + NADH + O2 + H(+) = taurine + NAD(+) + H2O. The enzyme catalyses trimethylamine + NADPH + O2 = trimethylamine N-oxide + NADP(+) + H2O. It catalyses the reaction N,N-dimethylaniline + NADPH + O2 + H(+) = N,N-dimethylaniline N-oxide + NADP(+) + H2O. Broad spectrum monooxygenase that catalyzes the oxygenation of a wide variety of nitrogen- and sulfur-containing compounds including xenobiotics. Catalyzes the S-oxygenation of hypotaurine to produce taurine, an organic osmolyte involved in cell volume regulation as well as a variety of cytoprotective and developmental processes. In vitro, catalyzes the N-oxygenation of trimethylamine (TMA) to produce trimethylamine N-oxide (TMAO) and could therefore participate to the detoxification of this compound that is generated by the action of gut microbiota from dietary precursors such as choline, choline containing compounds, betaine or L-carnitine. The chain is Flavin-containing monooxygenase 1 from Mus musculus (Mouse).